A 962-amino-acid chain; its full sequence is Rho GTPase-activating protein syd-1 (962 aa).

Disordered stretches follow at residues 231–367, 397–419, and 437–471; these read GKKS…MRSD, PRTL…RIMT, and CGEE…NGSP. Polar residues-rich tracts occupy residues 243–261, 323–345, 401–412, and 453–471; these read NATT…SSPR, SFNS…SSTA, RQPNDSNKSNSL, and PPFS…NGSP. In terms of domain architecture, C2 spans 572-696; the sequence is RAAGPGINVD…NDDRVFALNL (125 aa). Positions 729–923 constitute a Rho-GAP domain; that stretch reads VPLGRLVQRE…LDMNQASSSL (195 aa). Positions 934-947 are enriched in polar residues; that stretch reads VNSESGSDSPATSG. Residues 934–962 are disordered; it reads VNSESGSDSPATSGQKGGGGVSYVSESQC.

The protein resides in the synapse. In terms of biological role, probable GTPase activator for the Rho-type GTPases by converting them to an inactive GDP-bound state. Regulates the localization and assembly of presynaptic components during presynaptic development and is required for specifying the identity of axons during initial polarity acquisition. In these roles it is thought to act cell autonomously downstream of syg-1 and syg-2 and upstream of syd-2, possibly as a positive regulator of the latter. Required for the control of movement, egg-laying and the correct localization of elks-1. The polypeptide is Rho GTPase-activating protein syd-1 (Caenorhabditis briggsae).